The following is a 293-amino-acid chain: Protease HtpX (293 aa).

Helical transmembrane passes span 4–24 (IALF…VLSL) and 34–54 (GLMI…LLMS). His-139 is a binding site for Zn(2+). Residue Glu-140 is part of the active site. A Zn(2+)-binding site is contributed by His-143. Helical transmembrane passes span 158–178 (VVNT…AGFM) and 193–213 (LIYF…ASII). Glu-222 provides a ligand contact to Zn(2+).

It belongs to the peptidase M48B family. Zn(2+) serves as cofactor.

It is found in the cell inner membrane. This is Protease HtpX from Escherichia coli (strain ATCC 8739 / DSM 1576 / NBRC 3972 / NCIMB 8545 / WDCM 00012 / Crooks).